Reading from the N-terminus, the 603-residue chain is NADH-ubiquinone oxidoreductase chain 5 (603 aa).

16 consecutive transmembrane segments (helical) span residues 4 to 24 (YATMTTLALTSLIPPILGALI), 38 to 58 (SIIASTFIISLFPTTMFMCLD), 87 to 107 (MTFIPVALFVTWSIMEFSLWY), 122 to 142 (LIFLITMLILVTANNLFQLFI), 144 to 160 (WEGVGIMSFLLISWWYA), 171 to 191 (AILYNRIGDIGFVLALAWFLL), 211 to 233 (TPLLGFLLAAAGKSAQLGLHPWL), 241 to 261 (TPVSALLHSSTMVVAGIFLLI), 272 to 292 (LIQTLTLCLGAITTLFAAVCA), 301 to 320 (IVAFSTSSQLGLMMVTIGIN), 325 to 347 (AFLHICTHAFFKAMLFMCSGSII), 370 to 390 (STSLTIGSLALAGMPFLTGFY), 405 to 422 (NAWALSITLIATSLTSAY), 457 to 477 (LTIGSLFAGFLITNNILPMST), 482 to 502 (IPLYLKLTALGVTSLGLLTAL), and 582 to 602 (GMIKLYFLSFFFPLILTLLLI).

Belongs to the complex I subunit 5 family. In terms of assembly, core subunit of respiratory chain NADH dehydrogenase (Complex I) which is composed of 45 different subunits.

It localises to the mitochondrion inner membrane. It carries out the reaction a ubiquinone + NADH + 5 H(+)(in) = a ubiquinol + NAD(+) + 4 H(+)(out). Core subunit of the mitochondrial membrane respiratory chain NADH dehydrogenase (Complex I) which catalyzes electron transfer from NADH through the respiratory chain, using ubiquinone as an electron acceptor. Essential for the catalytic activity and assembly of complex I. This chain is NADH-ubiquinone oxidoreductase chain 5 (MT-ND5), found in Pan troglodytes (Chimpanzee).